The primary structure comprises 286 residues: Phosphate import ATP-binding protein PstB (286 aa).

In terms of domain architecture, ABC transporter spans 40–281 (VVAKDFSIFY…PRDRMTEDYI (242 aa)). Position 72-79 (72-79 (GPSGCGKS)) interacts with ATP.

It belongs to the ABC transporter superfamily. Phosphate importer (TC 3.A.1.7) family. In terms of assembly, the complex is composed of two ATP-binding proteins (PstB), two transmembrane proteins (PstC and PstA) and a solute-binding protein (PstS).

It localises to the cell inner membrane. The enzyme catalyses phosphate(out) + ATP + H2O = ADP + 2 phosphate(in) + H(+). Its function is as follows. Part of the ABC transporter complex PstSACB involved in phosphate import. Responsible for energy coupling to the transport system. The chain is Phosphate import ATP-binding protein PstB from Chlorobium luteolum (strain DSM 273 / BCRC 81028 / 2530) (Pelodictyon luteolum).